A 329-amino-acid polypeptide reads, in one-letter code: Cytosolic Fe-S cluster assembly factor NBP35 (329 aa).

Residues 1 to 33 (MAPSQVEDISKTELETPEHCPGPESEQAGKEDA) are disordered. Basic and acidic residues predominate over residues 8 to 18 (DISKTELETPE). Cysteine 20, cysteine 34, cysteine 37, and cysteine 43 together coordinate [4Fe-4S] cluster. Residue 74–81 (GKGGVGKS) participates in ATP binding. [4Fe-4S] cluster is bound by residues cysteine 248 and cysteine 251.

This sequence belongs to the Mrp/NBP35 ATP-binding proteins family. NUBP1/NBP35 subfamily. Heterotetramer of 2 NBP35 and 2 CFD1 chains. The cofactor is [4Fe-4S] cluster.

The protein localises to the cytoplasm. It localises to the nucleus. In terms of biological role, component of the cytosolic iron-sulfur (Fe/S) protein assembly (CIA) machinery. Required for maturation of extramitochondrial Fe-S proteins. The NBP35-CFD1 heterotetramer forms a Fe-S scaffold complex, mediating the de novo assembly of an Fe-S cluster and its transfer to target apoproteins. Required for biogenesis and export of both ribosomal subunits, which may reflect a role in assembly of the Fe/S clusters in RLI1, a protein which performs rRNA processing and ribosome export. The chain is Cytosolic Fe-S cluster assembly factor NBP35 from Debaryomyces hansenii (strain ATCC 36239 / CBS 767 / BCRC 21394 / JCM 1990 / NBRC 0083 / IGC 2968) (Yeast).